The chain runs to 213 residues: MKHDSFIAREGIPFIIAFGLTTLLAVFFLEQSWIAVLPLTATLFTCWFFRNPERHTPEGEKLIVSPADGKVIRIDEDFHHEMLSQPCSKVSIFMNVFNVHVNRVPYSGKVTKISYSPGRFLSANLDKASEQNERNAILVRTSDGKEIMTIQIAGLIARRIVCWVREEDVVKRGERFGMIRFGSRLEVFMPKETKILVTVGEKVKAGESPLGTF.

Residue Ser183 is the Schiff-base intermediate with substrate; via pyruvic acid of the active site. Ser183 bears the Pyruvic acid (Ser); by autocatalysis mark.

Belongs to the phosphatidylserine decarboxylase family. PSD-A subfamily. In terms of assembly, heterodimer of a large membrane-associated beta subunit and a small pyruvoyl-containing alpha subunit. Pyruvate serves as cofactor. In terms of processing, is synthesized initially as an inactive proenzyme. Formation of the active enzyme involves a self-maturation process in which the active site pyruvoyl group is generated from an internal serine residue via an autocatalytic post-translational modification. Two non-identical subunits are generated from the proenzyme in this reaction, and the pyruvate is formed at the N-terminus of the alpha chain, which is derived from the carboxyl end of the proenzyme. The post-translation cleavage follows an unusual pathway, termed non-hydrolytic serinolysis, in which the side chain hydroxyl group of the serine supplies its oxygen atom to form the C-terminus of the beta chain, while the remainder of the serine residue undergoes an oxidative deamination to produce ammonia and the pyruvoyl prosthetic group on the alpha chain.

Its subcellular location is the cell membrane. The catalysed reaction is a 1,2-diacyl-sn-glycero-3-phospho-L-serine + H(+) = a 1,2-diacyl-sn-glycero-3-phosphoethanolamine + CO2. Its pathway is phospholipid metabolism; phosphatidylethanolamine biosynthesis; phosphatidylethanolamine from CDP-diacylglycerol: step 2/2. Functionally, catalyzes the formation of phosphatidylethanolamine (PtdEtn) from phosphatidylserine (PtdSer). The sequence is that of Phosphatidylserine decarboxylase proenzyme from Syntrophus aciditrophicus (strain SB).